The sequence spans 67 residues: Large ribosomal subunit protein bL31 (67 aa).

It belongs to the bacterial ribosomal protein bL31 family. Type A subfamily. In terms of assembly, part of the 50S ribosomal subunit.

Its function is as follows. Binds the 23S rRNA. The sequence is that of Large ribosomal subunit protein bL31 from Wolinella succinogenes (strain ATCC 29543 / DSM 1740 / CCUG 13145 / JCM 31913 / LMG 7466 / NCTC 11488 / FDC 602W) (Vibrio succinogenes).